The chain runs to 128 residues: UPF0102 protein KPN78578_35270 (128 aa).

The interval 1–20 is disordered; sequence MAQVPAGKNRSGQLSKQTGD.

It belongs to the UPF0102 family.

The chain is UPF0102 protein KPN78578_35270 from Klebsiella pneumoniae subsp. pneumoniae (strain ATCC 700721 / MGH 78578).